A 180-amino-acid chain; its full sequence is Large ribosomal subunit protein uL5 (180 aa).

This sequence belongs to the universal ribosomal protein uL5 family. In terms of assembly, part of the 50S ribosomal subunit; part of the 5S rRNA/L5/L18/L25 subcomplex. Contacts the 5S rRNA and the P site tRNA. Forms a bridge to the 30S subunit in the 70S ribosome.

This is one of the proteins that bind and probably mediate the attachment of the 5S RNA into the large ribosomal subunit, where it forms part of the central protuberance. In the 70S ribosome it contacts protein S13 of the 30S subunit (bridge B1b), connecting the 2 subunits; this bridge is implicated in subunit movement. Contacts the P site tRNA; the 5S rRNA and some of its associated proteins might help stabilize positioning of ribosome-bound tRNAs. The chain is Large ribosomal subunit protein uL5 from Cupriavidus metallidurans (strain ATCC 43123 / DSM 2839 / NBRC 102507 / CH34) (Ralstonia metallidurans).